A 367-amino-acid chain; its full sequence is Membrane-bound lytic murein transglycosylase C (367 aa).

The signal sequence occupies residues Met1–Ala19. Residue Cys20 is the site of N-palmitoyl cysteine attachment. A lipid anchor (S-diacylglycerol cysteine) is attached at Cys20.

It belongs to the transglycosylase Slt family.

The protein resides in the cell outer membrane. It carries out the reaction Exolytic cleavage of the (1-&gt;4)-beta-glycosidic linkage between N-acetylmuramic acid (MurNAc) and N-acetylglucosamine (GlcNAc) residues in peptidoglycan, from either the reducing or the non-reducing ends of the peptidoglycan chains, with concomitant formation of a 1,6-anhydrobond in the MurNAc residue.. Its function is as follows. Murein-degrading enzyme. May play a role in recycling of muropeptides during cell elongation and/or cell division. This chain is Membrane-bound lytic murein transglycosylase C, found in Haemophilus ducreyi (strain 35000HP / ATCC 700724).